Reading from the N-terminus, the 437-residue chain is tRNA-2-methylthio-N(6)-dimethylallyladenosine synthase (437 aa).

Residues 2–117 enclose the MTTase N-terminal domain; the sequence is KHLYIKTFGC…LPQMIQRALD (116 aa). [4Fe-4S] cluster-binding residues include Cys-11, Cys-48, Cys-80, Cys-154, Cys-158, and Cys-161. The region spanning 140 to 372 is the Radical SAM core domain; that stretch reads RAQGVVGQVT…QQLLNTQQLQ (233 aa). One can recognise a TRAM domain in the interval 375–437; it reads KARVGRRESV…LPNSLRGRLV (63 aa).

It belongs to the methylthiotransferase family. MiaB subfamily. In terms of assembly, monomer. [4Fe-4S] cluster serves as cofactor.

It is found in the cytoplasm. It catalyses the reaction N(6)-dimethylallyladenosine(37) in tRNA + (sulfur carrier)-SH + AH2 + 2 S-adenosyl-L-methionine = 2-methylsulfanyl-N(6)-dimethylallyladenosine(37) in tRNA + (sulfur carrier)-H + 5'-deoxyadenosine + L-methionine + A + S-adenosyl-L-homocysteine + 2 H(+). Catalyzes the methylthiolation of N6-(dimethylallyl)adenosine (i(6)A), leading to the formation of 2-methylthio-N6-(dimethylallyl)adenosine (ms(2)i(6)A) at position 37 in tRNAs that read codons beginning with uridine. The chain is tRNA-2-methylthio-N(6)-dimethylallyladenosine synthase from Magnetococcus marinus (strain ATCC BAA-1437 / JCM 17883 / MC-1).